A 350-amino-acid chain; its full sequence is Chorismate synthase (350 aa).

2 residues coordinate NADP(+): Arg-39 and Arg-45. FMN-binding positions include 119-121 (RSS), 213-214 (QA), Gly-258, 273-277 (KPIPT), and Arg-299.

The protein belongs to the chorismate synthase family. As to quaternary structure, homotetramer. FMNH2 serves as cofactor.

The enzyme catalyses 5-O-(1-carboxyvinyl)-3-phosphoshikimate = chorismate + phosphate. It functions in the pathway metabolic intermediate biosynthesis; chorismate biosynthesis; chorismate from D-erythrose 4-phosphate and phosphoenolpyruvate: step 7/7. Catalyzes the anti-1,4-elimination of the C-3 phosphate and the C-6 proR hydrogen from 5-enolpyruvylshikimate-3-phosphate (EPSP) to yield chorismate, which is the branch point compound that serves as the starting substrate for the three terminal pathways of aromatic amino acid biosynthesis. This reaction introduces a second double bond into the aromatic ring system. The protein is Chorismate synthase of Thermoanaerobacter pseudethanolicus (strain ATCC 33223 / 39E) (Clostridium thermohydrosulfuricum).